Here is a 228-residue protein sequence, read N- to C-terminus: 2-C-methyl-D-erythritol 4-phosphate cytidylyltransferase (228 aa).

The protein belongs to the IspD/TarI cytidylyltransferase family. IspD subfamily.

The catalysed reaction is 2-C-methyl-D-erythritol 4-phosphate + CTP + H(+) = 4-CDP-2-C-methyl-D-erythritol + diphosphate. Its pathway is isoprenoid biosynthesis; isopentenyl diphosphate biosynthesis via DXP pathway; isopentenyl diphosphate from 1-deoxy-D-xylulose 5-phosphate: step 2/6. Functionally, catalyzes the formation of 4-diphosphocytidyl-2-C-methyl-D-erythritol from CTP and 2-C-methyl-D-erythritol 4-phosphate (MEP). This chain is 2-C-methyl-D-erythritol 4-phosphate cytidylyltransferase, found in Mannheimia succiniciproducens (strain KCTC 0769BP / MBEL55E).